Consider the following 349-residue polypeptide: Nucleoporin SEH1 (349 aa).

5 WD repeats span residues 7–46 (GHDD…SNWE), 53–94 (AHDS…EECS), 106–147 (DSKG…DLRS), 153–192 (EMKV…EQAI), and 210–253 (GHKS…SPLA). Phosphoserine is present on S257. The disordered stretch occupies residues 263 to 285 (MFDNSADVDMDAQGRSDSNTEEK). The span at 274–285 (AQGRSDSNTEEK) shows a compositional bias: basic and acidic residues. Residues 302–341 (DHNGEVWSVSWNLTGTILSSAGDDGKVRLWKATYSNEFKC) form a WD 6 repeat.

Belongs to the WD repeat SEC13 family. Component of the nuclear pore complex (NPC). NPC constitutes the exclusive means of nucleocytoplasmic transport. NPCs allow the passive diffusion of ions and small molecules and the active, nuclear transport receptor-mediated bidirectional transport of macromolecules such as proteins, RNAs, ribonucleoparticles (RNPs), and ribosomal subunits across the nuclear envelope. Due to its 8-fold rotational symmetry, all subunits are present with 8 copies or multiples thereof. SEH1 is part of the heptameric 0.5 MDa autoassembling NUP84 NPC subcomplex (NUP84, NUP85, NUP120, NUP133, NUP145C, SEC13 and SEH1). Component of the SEA complex composed of at least IML1/SEA1, RTC1/SEA2, MTC5/SEA3, NPR2, NPR3, SEA4, SEC13 and SEH1.

It localises to the nucleus. Its subcellular location is the nuclear pore complex. The protein localises to the nucleus membrane. The protein resides in the vacuole membrane. In terms of biological role, functions as a component of the nuclear pore complex (NPC). NPC components, collectively referred to as nucleoporins (NUPs), can play the role of both NPC structural components and of docking or interaction partners for transiently associated nuclear transport factors. Involved in nuclear poly(A)+ RNA export and NPC biogenesis. It is also required for normal nuclear morphology. Component of the SEA complex which coats the vacuolar membrane and is involved in intracellular trafficking, autophagy, response to nitrogen starvation, and amino acid biogenesis. This Saccharomyces cerevisiae (strain ATCC 204508 / S288c) (Baker's yeast) protein is Nucleoporin SEH1 (SEH1).